A 320-amino-acid chain; its full sequence is Olfactory receptor 10J1 (320 aa).

Over 1–36 the chain is Extracellular; it reads MLLCFRFGNQSMKRENFTLITDFVFQGFSSFHEQQI. Residues N9 and N16 are each glycosylated (N-linked (GlcNAc...) asparagine). The helical transmembrane segment at 37-57 threads the bilayer; it reads TLFGVFLALYILTLAGNIIIV. At 58–65 the chain is on the cytoplasmic side; sequence TIIRMDLH. A helical membrane pass occupies residues 66–86; it reads LHTPMYFFLSMLSTSETVYTL. Residues 87–110 are Extracellular-facing; that stretch reads VILPRMLSSLVGMSQPISLAGCAT. Cysteines 108 and 199 form a disulfide. The chain crosses the membrane as a helical span at residues 111-131; sequence QMFFFVTFGITNCFLLTAMGY. At 132–150 the chain is on the cytoplasmic side; sequence DRYVAICNPLRYMVIMNKR. The helical transmembrane segment at 151-171 threads the bilayer; it reads LRIQLVLGACSIGLIVAITQV. The Extracellular segment spans residues 172-207; it reads TSVFRLPFCARKVPHFFCDIRPVMKLSCIDTTVNEI. Residues 208–227 form a helical membrane-spanning segment; that stretch reads LTLIISVLVLVVPMGLVFIS. Residues 228–247 are Cytoplasmic-facing; sequence YVLIISTILKIASVEGRKKA. Residues 248 to 268 form a helical membrane-spanning segment; the sequence is FATCASHLTVVIVHYSCASIA. The Extracellular portion of the chain corresponds to 269–281; that stretch reads YLKPKSENTREHD. Residues 282-302 form a helical membrane-spanning segment; it reads QLISVTYTVITPLLNPVVYTL. Residues 303-320 are Cytoplasmic-facing; that stretch reads RNKEVKDALCRAVGGKFS.

The protein belongs to the G-protein coupled receptor 1 family.

Its subcellular location is the cell membrane. In terms of biological role, odorant receptor. The polypeptide is Olfactory receptor 10J1 (OR10J1) (Homo sapiens (Human)).